A 364-amino-acid chain; its full sequence is Transposase for insertion sequence element IS1111A (364 aa).

It belongs to the transposase IS1111A/IS1328/IS1533 family.

Required for the transposition of the insertion element. The sequence is that of Transposase for insertion sequence element IS1111A from Coxiella burnetii (strain RSA 493 / Nine Mile phase I).